A 650-amino-acid chain; its full sequence is Solute carrier family 23 member 2 (650 aa).

Over residues 1-20 the composition is skewed to polar residues; that stretch reads MMGIGKNTTSKSMEAGSSTE. A disordered region spans residues 1–21; it reads MMGIGKNTTSKSMEAGSSTEG. The Cytoplasmic segment spans residues 9–110; sequence TSKSMEAGSS…LCIFLGLQHY (102 aa). Ser70 carries the phosphoserine modification. Thr75 carries the post-translational modification Phosphothreonine. A Phosphoserine modification is found at Ser78. Thr79 is modified (phosphothreonine). Residue Ser81 is modified to Phosphoserine. Residues 111-131 form a helical membrane-spanning segment; the sequence is LTCFSGTIAVPFLLADAMCVG. Residues 132–139 lie on the Extracellular side of the membrane; that stretch reads YDQWATSQ. A helical transmembrane segment spans residues 140 to 160; it reads LIGTIFFCVGITTLLQTTFGC. Residue Arg161 is a topological domain, cytoplasmic. A helical membrane pass occupies residues 162–182; that stretch reads LPLFQASAFAFLAPARAILSL. Residues 183-218 lie on the Extracellular side of the membrane; that stretch reads DKWKCNTTDVSVANGTAELLHTEHIWYPRIREIQGA. N-linked (GlcNAc...) asparagine glycosylation is found at Asn188 and Asn196. Residues 219–239 traverse the membrane as a helical segment; it reads IIMSSLIEVVIGLLGLPGALL. Residues 240 to 266 lie on the Cytoplasmic side of the membrane; the sequence is KYIGPLTITPTVALIGLSGFQAAGERA. A helical transmembrane segment spans residues 267-284; sequence GKHWGIAMLTIFLVLLFS. The Extracellular segment spans residues 285 to 288; that stretch reads QYAR. The segment at residues 289–302 is an intramembrane region (helical); it reads NVKFPLPIYKSKKG. Residues 303-309 lie on the Extracellular side of the membrane; the sequence is WTAYKLQ. The helical transmembrane segment at 310-330 threads the bilayer; that stretch reads LFKMFPIILAILVSWLLCFIF. Topologically, residues 331-371 are cytoplasmic; that stretch reads TVTDVFPPDSTKYGFYARTDARQGVLLVAPWFKVPYPFQWG. Residues 372–392 form a helical membrane-spanning segment; that stretch reads LPTVSAAGVIGMLSAVVASII. Residues 393 to 417 lie on the Extracellular side of the membrane; the sequence is ESIGDYYACARLSCAPPPPIHAINR. The helical transmembrane segment at 418 to 438 threads the bilayer; it reads GIFVEGLSCVLDGIFGTGNGS. The Cytoplasmic segment spans residues 439–461; it reads TSSSPNIGVLGITKVGSRRVIQC. The helical transmembrane segment at 462–482 threads the bilayer; the sequence is GAALMLALGMIGKFSALFASL. Residues 483–485 lie on the Extracellular side of the membrane; the sequence is PDP. The helical transmembrane segment at 486 to 506 threads the bilayer; that stretch reads VLGALFCTLFGMITAVGLSNL. Residues 507-516 are Cytoplasmic-facing; it reads QFIDLNSSRN. Residues 517–537 traverse the membrane as a helical segment; sequence LFVLGFSIFFGLVLPSYLRQN. Residues 538-547 are Extracellular-facing; the sequence is PLVTGITGID. A helical membrane pass occupies residues 548–568; it reads QVLNVLLTTAMFVGGCVAFIL. The Cytoplasmic portion of the chain corresponds to 569–650; that stretch reads DNTIPGTPEE…SSDEDSQATG (82 aa). A Phosphothreonine modification is found at Thr649.

The protein belongs to the nucleobase:cation symporter-2 (NCS2) (TC 2.A.40) family. As to quaternary structure, interacts with CLSTN3. Post-translationally, phosphorylated. In terms of tissue distribution, ubiquitous.

The protein resides in the cell membrane. The enzyme catalyses L-ascorbate(out) + 2 Na(+)(out) = L-ascorbate(in) + 2 Na(+)(in). Sodium/ascorbate cotransporter. Mediates electrogenic uptake of vitamin C, with a stoichiometry of 2 Na(+) for each ascorbate. This Homo sapiens (Human) protein is Solute carrier family 23 member 2 (SLC23A2).